The following is an 826-amino-acid chain: Ubiquitin carboxyl-terminal hydrolase 16 (826 aa).

The segment at 22–142 adopts a UBP-type zinc-finger fold; that stretch reads PVCRHIRKGL…QVVDYVRKQA (121 aa). Positions 24, 26, 48, 51, 74, 77, 82, 90, 94, 103, 116, and 119 each coordinate Zn(2+). A Glycyl lysine isopeptide (Lys-Gly) (interchain with G-Cter in SUMO2) cross-link involves residue Lys140. Positions 144 to 189 are disordered; that stretch reads NTTPESAEDNGNIELENKKLEKESKNEQEREKKENMARENPSMNST. A compositionally biased stretch (basic and acidic residues) spans 158 to 180; the sequence is LENKKLEKESKNEQEREKKENMA. The residue at position 188 (Ser188) is a Phosphoserine. Residues 195–825 enclose the USP domain; the sequence is KGLSNLGNTC…QAYLLFYERI (631 aa). Cys204 functions as the Nucleophile in the catalytic mechanism. Basic and acidic residues predominate over residues 393–407; the sequence is SGKKSINDKNLKKTM. The segment at 393–458 is disordered; the sequence is SGKKSINDKN…QAKNQRRQQK (66 aa). Acidic residues predominate over residues 408–419; sequence EDEDKDSEEEKD. Ser414 carries the post-translational modification Phosphoserine. The segment covering 420 to 429 has biased composition (basic and acidic residues); sequence NDSYLKERND. The span at 437-457 shows a compositional bias: basic residues; the sequence is HLQKKAKKQAKKQAKNQRRQQ. 2 positions are modified to phosphoserine: Ser530 and Ser551. The active-site Proton acceptor is His760.

This sequence belongs to the peptidase C19 family. USP16 subfamily. Homotetramer. Associates with late pre-40S ribosomes. Interacts with CEP78; promoting deubiquitination of tektins. Post-translationally, phosphorylated at the onset of mitosis and dephosphorylated during the metaphase/anaphase transition. Phosphorylation by AURKB enhances the deubiquitinase activity.

It localises to the nucleus. The catalysed reaction is Thiol-dependent hydrolysis of ester, thioester, amide, peptide and isopeptide bonds formed by the C-terminal Gly of ubiquitin (a 76-residue protein attached to proteins as an intracellular targeting signal).. Specifically deubiquitinates 'Lys-120' of histone H2A (H2AK119Ub), a specific tag for epigenetic transcriptional repression, thereby acting as a coactivator. Deubiquitination of histone H2A is a prerequisite for subsequent phosphorylation at 'Ser-11' of histone H3 (H3S10ph), and is required for chromosome segregation when cells enter into mitosis. In resting B- and T-lymphocytes, phosphorylation by AURKB leads to enhance its activity, thereby maintaining transcription in resting lymphocytes. Regulates Hox gene expression via histone H2A deubiquitination. Prefers nucleosomal substrates. Does not deubiquitinate histone H2B. Also deubiquitinates non-histone proteins, such as ribosomal protein RPS27A: deubiquitination of monoubiquitinated RPS27A promotes maturation of the 40S ribosomal subunit. Also mediates deubiquitination of tektin proteins (TEKT1, TEKT2, TEK3, TEKT4 and TEKT5), promoting their stability. The protein is Ubiquitin carboxyl-terminal hydrolase 16 of Bos taurus (Bovine).